The sequence spans 209 residues: Small ribosomal subunit protein uS4 (209 aa).

Residues 99–162 (RRLDNVVYRL…RESNKFQEMK (64 aa)) enclose the S4 RNA-binding domain.

It belongs to the universal ribosomal protein uS4 family. Part of the 30S ribosomal subunit. Contacts protein S5. The interaction surface between S4 and S5 is involved in control of translational fidelity.

One of the primary rRNA binding proteins, it binds directly to 16S rRNA where it nucleates assembly of the body of the 30S subunit. Functionally, with S5 and S12 plays an important role in translational accuracy. This chain is Small ribosomal subunit protein uS4, found in Syntrophomonas wolfei subsp. wolfei (strain DSM 2245B / Goettingen).